We begin with the raw amino-acid sequence, 312 residues long: Probable cell division protein WhiA (312 aa).

Positions 274–308 (SLKELGTLVPGGPISKSGVNHRLRKLNAYADELRQ) form a DNA-binding region, H-T-H motif.

It belongs to the WhiA family.

In terms of biological role, involved in cell division and chromosome segregation. In Limosilactobacillus fermentum (strain NBRC 3956 / LMG 18251) (Lactobacillus fermentum), this protein is Probable cell division protein WhiA.